Reading from the N-terminus, the 399-residue chain is Probable F-box protein At4g22060 (399 aa).

Positions 12-48 (SWSKLPLDLLIMVFERLGFVDFQRTKSVCLAWLYASR) constitute an F-box domain.

In Arabidopsis thaliana (Mouse-ear cress), this protein is Probable F-box protein At4g22060.